The following is a 221-amino-acid chain: Phosphoenolpyruvate guanylyltransferase (221 aa).

Residues threonine 154, glycine 169, and serine 172 each contribute to the phosphoenolpyruvate site.

It belongs to the CofC family.

It carries out the reaction phosphoenolpyruvate + GTP + H(+) = enolpyruvoyl-2-diphospho-5'-guanosine + diphosphate. It participates in cofactor biosynthesis; coenzyme F420 biosynthesis. In terms of biological role, guanylyltransferase that catalyzes the activation of phosphoenolpyruvate (PEP) as enolpyruvoyl-2-diphospho-5'-guanosine, via the condensation of PEP with GTP. It is involved in the biosynthesis of coenzyme F420, a hydride carrier cofactor. The protein is Phosphoenolpyruvate guanylyltransferase of Mycolicibacterium smegmatis (strain ATCC 700084 / mc(2)155) (Mycobacterium smegmatis).